The sequence spans 92 residues: Small ribosomal subunit protein uS19 (92 aa).

Belongs to the universal ribosomal protein uS19 family.

Its function is as follows. Protein S19 forms a complex with S13 that binds strongly to the 16S ribosomal RNA. The protein is Small ribosomal subunit protein uS19 of Bartonella quintana (strain Toulouse) (Rochalimaea quintana).